A 499-amino-acid chain; its full sequence is MTSLDFSTILPEVVLAGYALAALMAGAYLGKDRLARTLLWVTVAAFLVVAAMVGLGNHVDGAAFHGMFIDDGFSRFAKVVTLVAAAGVLAMSADYMQRRNMLRFEFPIIVALAVLGMMFMVSAGDLLTLYMGLELQSLALYVVAAMRRDSVRSSEAGLKYFVLGSLSSGLLLYGASLVYGFAGTTGFEGIISTIEAGHLSLGVLFGLVFMLVGLSFKVSAVPFHMWTPDVYEGSPTPVTAFFATAPKVAAMALIARLVFDAFGHVIGDWSQIVAALAVMSMFLGSIAGIGQTNIKRLMAYSSIAHMGFALVGLAAGTAIGVQNMLLYMTIYAVMNIGTFAFILSMERDGVPVTDLAALNRFAWTDPVKALAMLVLMFSLAGVPPTLGFFAKFGVLTAAVDAGMGWLAVLGVIASVIGAFYYLRIVYYMYFGGESEGMTSRMGAVQYLALMVPALAMLVGAISMFGVDSAAGRAAETLVGPVAAIEQPAEAAQAEPVQGE.

Transmembrane regions (helical) follow at residues 9–29, 37–57, 76–96, 104–124, 126–146, 161–181, 196–216, 235–255, 269–289, 301–321, 324–344, 369–389, 402–422, and 446–466; these read ILPEVVLAGYALAALMAGAYL, TLLWVTVAAFLVVAAMVGLGN, FAKVVTLVAAAGVLAMSADYM, FEFPIIVALAVLGMMFMVSAG, LLTLYMGLELQSLALYVVAAM, FVLGSLSSGLLLYGASLVYGF, AGHLSLGVLFGLVFMLVGLSF, PTPVTAFFATAPKVAAMALIA, WSQIVAALAVMSMFLGSIAGI, SSIAHMGFALVGLAAGTAIGV, MLLYMTIYAVMNIGTFAFILS, ALAMLVLMFSLAGVPPTLGFF, GMGWLAVLGVIASVIGAFYYL, and YLALMVPALAMLVGAISMFGV.

It belongs to the complex I subunit 2 family. In terms of assembly, NDH-1 is composed of at least 14 different subunits, Nqo1 to Nqo14. The complex has a L-shaped structure, with the hydrophobic arm (subunits Nqo7, Nqo8, Nqo10 to Nqo14) embedded in the inner membrane and the hydrophilic peripheral arm (subunits Nqo1 to Nqo6, Nqo9) protruding into the bacterial cytoplasm. The hydrophilic domain contains all the redox centers.

Its subcellular location is the cell inner membrane. The enzyme catalyses a quinone + NADH + 5 H(+)(in) = a quinol + NAD(+) + 4 H(+)(out). NDH-1 shuttles electrons from NADH, via FMN and iron-sulfur (Fe-S) centers, to quinones in the respiratory chain. The immediate electron acceptor for the enzyme in this species is believed to be ubiquinone. Couples the redox reaction to proton translocation (for every two electrons transferred, four hydrogen ions are translocated across the cytoplasmic membrane), and thus conserves the redox energy in a proton gradient. This Paracoccus denitrificans protein is NADH-quinone oxidoreductase subunit 14.